A 248-amino-acid polypeptide reads, in one-letter code: MGQKTNPNGLRLGIIRSWESKWYANEKDVPALINEDYNIRKYLNKVYKKAGVSQIEIERLKGKAKDRIKVTLYTAKPGIVIGRDGETRNKAVSELEYLTKKEIVFNVVEVKRPEKVAELVAQNMAEQLENRASFRRVQKIAIQRALKSGAKGVKTLVSGRLGGAEMARSEGYSEGRVPLHTLRADVDYATAEAHTTYGVLGIKVWVFHGEVLPGQTILDTRKPFEASAPRPQRRNRKEANNYVNAKKN.

The region spanning 39 to 111 is the KH type-2 domain; it reads IRKYLNKVYK…EIVFNVVEVK (73 aa). The segment at 222-248 is disordered; sequence KPFEASAPRPQRRNRKEANNYVNAKKN.

This sequence belongs to the universal ribosomal protein uS3 family. In terms of assembly, part of the 30S ribosomal subunit. Forms a tight complex with proteins S10 and S14.

In terms of biological role, binds the lower part of the 30S subunit head. Binds mRNA in the 70S ribosome, positioning it for translation. This Alteracholeplasma palmae (strain ATCC 49389 / J233) (Acholeplasma palmae) protein is Small ribosomal subunit protein uS3.